Consider the following 297-residue polypeptide: MSKIRGLPPAIRDPGPGVELGVVDGLLCQLIHSPEFNLFSDSVVFESTFIQVTKQGNWMDAYERSATMILGVTSSVPSLPLPNILLMANVTWPHGPFSTCSTLGAPVITLSRILPLKYVELQIYDRTQRILRVRTVTEKIYYLRLHEKHPQAVFQFWIRLVKILQKGLSITTKDPRIQFTHCLVPKMSNSSTETATESSLPASSQNSEAIMLLAAERNSSSLLELSNRHQTSRDRHTDTATETDNSGNCKSTPLVASSASMPMRAALTHSLWEQEDSNENFLQAPVASSLGENLLGP.

Residues 226–257 (SNRHQTSRDRHTDTATETDNSGNCKSTPLVAS) are disordered. Residues 240-257 (ATETDNSGNCKSTPLVAS) are compositionally biased toward polar residues.

The protein belongs to the GARIN family. Interacts (via N-terminus) with RAB2B (in GTP-bound form). As to expression, expressed in testis (at protein level).

It is found in the golgi apparatus. Functionally, RAB2B effector protein required for accurate acrosome formation and normal male fertility. In Mus musculus (Mouse), this protein is Golgi-associated RAB2 interactor protein 1A.